Here is a 248-residue protein sequence, read N- to C-terminus: Trypsin II-P29 (248 aa).

A signal peptide spans 1–16 (MKFLFLILSCLGAAVA). A propeptide spans 17–25 (FPGGADDDK) (activation peptide). Residues 26-246 (IVGGYTCPEH…YVDWIQETIA (221 aa)) enclose the Peptidase S1 domain. Cystine bridges form between Cys-32–Cys-162, Cys-50–Cys-66, Cys-134–Cys-235, Cys-141–Cys-208, Cys-173–Cys-187, and Cys-198–Cys-222. His-65 serves as the catalytic Charge relay system. Residues Glu-77, Asn-79, Val-82, and Glu-87 each contribute to the Ca(2+) site. Asp-109 serves as the catalytic Charge relay system. Ser-202 functions as the Charge relay system in the catalytic mechanism.

Belongs to the peptidase S1 family. It depends on Ca(2+) as a cofactor. As to expression, high levels are seen in the pancreas while lower levels are found in the liver, spleen and thymus.

It is found in the secreted. The protein resides in the extracellular space. The catalysed reaction is Preferential cleavage: Arg-|-Xaa, Lys-|-Xaa.. The protein is Trypsin II-P29 of Gallus gallus (Chicken).